Here is a 207-residue protein sequence, read N- to C-terminus: Cytochrome c biogenesis ATP-binding export protein CcmA 1 (207 aa).

The 202-residue stretch at 6–207 folds into the ABC transporter domain; the sequence is LEALDLAGVR…KTSQTVRMGA (202 aa). Residue 38-45 coordinates ATP; that stretch reads GENGSGKT.

Belongs to the ABC transporter superfamily. CcmA exporter (TC 3.A.1.107) family. In terms of assembly, the complex is composed of two ATP-binding proteins (CcmA) and two transmembrane proteins (CcmB).

It is found in the cell inner membrane. It catalyses the reaction heme b(in) + ATP + H2O = heme b(out) + ADP + phosphate + H(+). Functionally, part of the ABC transporter complex CcmAB involved in the biogenesis of c-type cytochromes; once thought to export heme, this seems not to be the case, but its exact role is uncertain. Responsible for energy coupling to the transport system. The polypeptide is Cytochrome c biogenesis ATP-binding export protein CcmA 1 (Cupriavidus metallidurans (strain ATCC 43123 / DSM 2839 / NBRC 102507 / CH34) (Ralstonia metallidurans)).